The primary structure comprises 295 residues: Methionine aminopeptidase (295 aa).

A substrate-binding site is contributed by H62. Residues D82, D93, and H153 each contribute to the a divalent metal cation site. A substrate-binding site is contributed by H161. A divalent metal cation-binding residues include E187 and E280.

Belongs to the peptidase M24A family. Methionine aminopeptidase archaeal type 2 subfamily. In terms of assembly, monomer. The cofactor is Co(2+). Zn(2+) serves as cofactor. It depends on Mn(2+) as a cofactor. Fe(2+) is required as a cofactor.

It carries out the reaction Release of N-terminal amino acids, preferentially methionine, from peptides and arylamides.. In terms of biological role, removes the N-terminal methionine from nascent proteins. The N-terminal methionine is often cleaved when the second residue in the primary sequence is small and uncharged (Met-Ala-, Cys, Gly, Pro, Ser, Thr, or Val). The protein is Methionine aminopeptidase of Pyrococcus abyssi (strain GE5 / Orsay).